A 919-amino-acid chain; its full sequence is Exostosin-like 3 (919 aa).

The Cytoplasmic portion of the chain corresponds to methionine 1–threonine 30. The required for interaction with REG3A stretch occupies residues methionine 1–histidine 140. Residues tryptophan 31–leucine 51 traverse the membrane as a helical; Signal-anchor for type II membrane protein segment. The Lumenal segment spans residues threonine 52–isoleucine 919. 2 disulfide bridges follow: cysteine 177-cysteine 182 and cysteine 188-cysteine 236. N-linked (GlcNAc...) asparagine glycosylation is present at asparagine 290. Serine 362 bears the Phosphoserine mark. A disulfide bond links cysteine 400 and cysteine 415. The N-linked (GlcNAc...) asparagine glycan is linked to asparagine 592. Residues leucine 668, arginine 672, asparagine 697, asparagine 723, arginine 728, aspartate 744, aspartate 745, and aspartate 746 each contribute to the UDP-N-acetyl-alpha-D-glucosamine site. A Mn(2+)-binding site is contributed by aspartate 746. The N-linked (GlcNAc...) asparagine glycan is linked to asparagine 790. The cysteines at positions 831 and 879 are disulfide-linked. Positions 832, 833, and 876 each coordinate UDP-N-acetyl-alpha-D-glucosamine. Aspartate 833 is a catalytic residue.

This sequence belongs to the glycosyltransferase 47 family. As to quaternary structure, homodimer; disulfide-linked. Interacts with REG3A. It depends on Mn(2+) as a cofactor. Ubiquitous. Expressed in keratinocytes. Expressed in pancreas.

It localises to the endoplasmic reticulum membrane. Its subcellular location is the golgi apparatus. It is found in the cell membrane. The protein localises to the nucleus. It carries out the reaction 3-O-(beta-D-GlcA-(1-&gt;3)-beta-D-Gal-(1-&gt;3)-beta-D-Gal-(1-&gt;4)-beta-D-Xyl)-L-seryl-[protein] + UDP-N-acetyl-alpha-D-glucosamine = 3-O-(alpha-D-GlcNAc-(1-&gt;4)-beta-D-GlcA-(1-&gt;3)-beta-D-Gal-(1-&gt;3)-beta-D-Gal-(1-&gt;4)-beta-D-Xyl)-L-seryl-[protein] + UDP + H(+). It functions in the pathway glycan metabolism; heparan sulfate biosynthesis. Glycosyltransferase which regulates the biosynthesis of heparan sulfate (HS). Initiates HS synthesis by transferring the first N-acetyl-alpha-D-glucosamine (alpha-GlcNAc) residue (GlcNAcT-I activity) to the tetrasaccharide linker (GlcA-Gal-Gal-Xyl-)Ser core linker. May also transfer alpha-GlcNAc residues during HS elongation (GlcNAcT-II activity). Lacks glucuronyl transferase II (GlcAT-II) activity. Important for both skeletal development and hematopoiesis, through the formation of HS proteoglycans (HSPGs). Through the synthesis of HS, regulates postnatal pancreatic islet maturation and insulin secretion. In terms of biological role, receptor for REG3A, REG3B and REG3G, induces the activation of downstream signaling pathways such as PI3K-AKT or RAS-RAF-MEK-ERK signaling pathway. Required for the function of REG3A in regulating keratinocyte proliferation and differentiation. Required for the inhibition of skin inflammation mediated by REG3A through the activation of PI3K-AKT-STAT3 pathway. Required for the function of REG3A and REG3G in glucose tolerance in pancreas. Expressed in microglia, is activated by nociceptor-derived REG3G in response to endotoxins, leading to the inhibition of kynurenine pathway to prevent endotoxic death. This is Exostosin-like 3 from Homo sapiens (Human).